The sequence spans 175 residues: Apoptosis regulatory protein Siva (175 aa).

Phosphotyrosine; by ABL2 is present on Tyr-34. Residues 36 to 55 (QEVFEKTKRLLFLGAQAYLD) form an interaction with BCL2L1 isoform Bcl-x(L) and inhibition of BCL2L1 anti-apoptotic activity region. Ser-70 is subject to Phosphoserine. The segment at 105-123 (DPSGVASIACSSCVRAVDG) is interaction with coxsackievirus B3 VP2.

In terms of assembly, binds through its N-terminal region to the C-terminus of CD27 and to PXMP2/PMP22. Binds to the C-terminus of TNFRSF18/GITR. Isoform 1 binds to BCL2L1/BCLX isoform Bcl-x(L) but not to BAX. As to quaternary structure, (Microbial infection) Interacts with coxsackievirus B3 capsid protein VP2; this interaction inhibits the binding of SIVA1 to CD27. Zn(2+) serves as cofactor. In terms of processing, phosphorylated by ABL2/ARG in response to oxidative stress. As to expression, ubiquitous. Mostly expressed in thymus, testis, ovary, prostate, small intestine and spleen and less in colon.

It is found in the cytoplasm. The protein resides in the nucleus. In terms of biological role, induces CD27-mediated apoptosis. Inhibits BCL2L1 isoform Bcl-x(L) anti-apoptotic activity. Inhibits activation of NF-kappa-B and promotes T-cell receptor-mediated apoptosis. In Homo sapiens (Human), this protein is Apoptosis regulatory protein Siva (SIVA1).